We begin with the raw amino-acid sequence, 137 residues long: Nucleoside diphosphate kinase (137 aa).

Residues K9, F57, R85, T91, R102, and N112 each coordinate ATP. H115 functions as the Pros-phosphohistidine intermediate in the catalytic mechanism.

This sequence belongs to the NDK family. As to quaternary structure, homotetramer. Requires Mg(2+) as cofactor.

The protein resides in the cytoplasm. It carries out the reaction a 2'-deoxyribonucleoside 5'-diphosphate + ATP = a 2'-deoxyribonucleoside 5'-triphosphate + ADP. It catalyses the reaction a ribonucleoside 5'-diphosphate + ATP = a ribonucleoside 5'-triphosphate + ADP. Functionally, major role in the synthesis of nucleoside triphosphates other than ATP. The ATP gamma phosphate is transferred to the NDP beta phosphate via a ping-pong mechanism, using a phosphorylated active-site intermediate. The chain is Nucleoside diphosphate kinase from Geotalea uraniireducens (strain Rf4) (Geobacter uraniireducens).